A 719-amino-acid polypeptide reads, in one-letter code: Phosphoribosylformylglycinamidine synthase subunit PurL (719 aa).

The active site involves histidine 45. Residues tyrosine 48 and lysine 87 each coordinate ATP. Position 89 (glutamate 89) interacts with Mg(2+). Substrate is bound by residues 90-93 and arginine 112; that span reads SHNH. The Proton acceptor role is filled by histidine 91. Aspartate 113 provides a ligand contact to Mg(2+). Glutamine 236 is a substrate binding site. Residue aspartate 264 participates in Mg(2+) binding. 308–310 serves as a coordination point for substrate; it reads ESQ. Asparagine 493 and glycine 530 together coordinate ATP. Asparagine 531 serves as a coordination point for Mg(2+). Serine 533 contributes to the substrate binding site.

The protein belongs to the FGAMS family. Monomer. Part of the FGAM synthase complex composed of 1 PurL, 1 PurQ and 2 PurS subunits.

The protein resides in the cytoplasm. It carries out the reaction N(2)-formyl-N(1)-(5-phospho-beta-D-ribosyl)glycinamide + L-glutamine + ATP + H2O = 2-formamido-N(1)-(5-O-phospho-beta-D-ribosyl)acetamidine + L-glutamate + ADP + phosphate + H(+). The protein operates within purine metabolism; IMP biosynthesis via de novo pathway; 5-amino-1-(5-phospho-D-ribosyl)imidazole from N(2)-formyl-N(1)-(5-phospho-D-ribosyl)glycinamide: step 1/2. Part of the phosphoribosylformylglycinamidine synthase complex involved in the purines biosynthetic pathway. Catalyzes the ATP-dependent conversion of formylglycinamide ribonucleotide (FGAR) and glutamine to yield formylglycinamidine ribonucleotide (FGAM) and glutamate. The FGAM synthase complex is composed of three subunits. PurQ produces an ammonia molecule by converting glutamine to glutamate. PurL transfers the ammonia molecule to FGAR to form FGAM in an ATP-dependent manner. PurS interacts with PurQ and PurL and is thought to assist in the transfer of the ammonia molecule from PurQ to PurL. This Novosphingobium aromaticivorans (strain ATCC 700278 / DSM 12444 / CCUG 56034 / CIP 105152 / NBRC 16084 / F199) protein is Phosphoribosylformylglycinamidine synthase subunit PurL.